A 919-amino-acid polypeptide reads, in one-letter code: Plasma membrane ATPase 1 (919 aa).

Positions 1 to 16 (MADNAGEYHDAEKHAP) are enriched in basic and acidic residues. A disordered region spans residues 1-73 (MADNAGEYHD…APAAGEAKAV (73 aa)). Residues 1–113 (MADNAGEYHD…KEELENPFLK (113 aa)) lie on the Cytoplasmic side of the membrane. Residues 34–63 (QDDEPDDDIDALIEELFSEDVQEEQEDNDD) show a composition bias toward acidic residues. A Phosphoserine modification is found at serine 89. A helical transmembrane segment spans residues 114–134 (FIMFFVGPIQFVMEMAAALAA). Residues 135–138 (GLRD) are Extracellular-facing. A helical transmembrane segment spans residues 139–158 (WVDFGVICALLMLNAVVGFV). The Cytoplasmic segment spans residues 159 to 289 (QEYQAGSIVD…GTGHFTEVLN (131 aa)). Residues 290 to 311 (GIGTILLVLVLLTLFCIYTAAF) traverse the membrane as a helical segment. At 312 to 322 (YRSVRLARLLE) the chain is on the extracellular side. A helical transmembrane segment spans residues 323 to 345 (YTLAITIIGVPVGLPAVVTTTMA). The Cytoplasmic portion of the chain corresponds to 346-717 (VGAAYLAEKQ…LIIRNQLLNL (372 aa)). The 4-aspartylphosphate intermediate role is filled by aspartate 376. Serine 494 carries the phosphoserine modification. Positions 632 and 636 each coordinate Mg(2+). A helical transmembrane segment spans residues 718–736 (ELVVFIAIFADVATLAIAY). At 737-752 (DNAPYSMKPVKWNLPR) the chain is on the extracellular side. The helical transmembrane segment at 753-772 (LWGLSTVIGIVLAIGTWITN) threads the bilayer. Residues 773-824 (TTMIAQGQNRGIVQNFGVQDEVLFLEISLTENWLIFVTRCNGPFWSSIPSWQ) are Cytoplasmic-facing. The helical transmembrane segment at 825–845 (LSGAVLAVDILATMFCIFGWF) threads the bilayer. Topologically, residues 846–858 (KGGHQTSIVAVLR) are extracellular. The chain crosses the membrane as a helical span at residues 859–875 (IWMYSFGIFCIMAGTYY). Residues 876–919 (ILSESAGFDRMMNGKPKESRNQRSIEDLVVALQRTSTRHEKGDA) lie on the Cytoplasmic side of the membrane. Position 899 is a phosphoserine (serine 899).

The protein belongs to the cation transport ATPase (P-type) (TC 3.A.3) family. Type IIIA subfamily.

Its subcellular location is the cell membrane. The enzyme catalyses ATP + H2O + H(+)(in) = ADP + phosphate + 2 H(+)(out). In terms of biological role, the plasma membrane ATPase of plants and fungi is a hydrogen ion pump. The proton gradient it generates drives the active transport of nutrients by H(+)-symport. The resulting external acidification and/or internal alkinization may mediate growth responses. This is Plasma membrane ATPase 1 (pma1) from Schizosaccharomyces pombe (strain 972 / ATCC 24843) (Fission yeast).